The chain runs to 334 residues: G-protein coupled receptor 12 (334 aa).

Topologically, residues 1–48 (MNEDPKVNLSGLPRDCIEAGTPENISAAVPSQGSVVESEPELVVNPWD) are extracellular. N8 and N24 each carry an N-linked (GlcNAc...) asparagine glycan. The helical transmembrane segment at 49–69 (IVLCSSGTLICCENAVVVLII) threads the bilayer. Topologically, residues 70-78 (FHSPSLRAP) are cytoplasmic. Residues 79–99 (MFLLIGSLALADLLAGLGLII) form a helical membrane-spanning segment. Residues 100–113 (NFVFAYLLQSEATK) lie on the Extracellular side of the membrane. A helical transmembrane segment spans residues 114 to 134 (LVTIGLIVASFSASVCSLLAI). Over 135–158 (TVDRYLSLYYALTYHSERTVTFTY) the chain is Cytoplasmic. The helical transmembrane segment at 159–179 (VMLVMLWGTSTCLGLLPVMGW) threads the bilayer. Topologically, residues 180 to 199 (NCLRDESTCSVVRPLTKNNA) are extracellular. A helical transmembrane segment spans residues 200 to 220 (AILSISFLFMFALMLQLYIQI). Over 221-252 (CKIVMRHAHQIALQHHFLATSHYVTTRKGIST) the chain is Cytoplasmic. A helical membrane pass occupies residues 253-273 (LALILGTFAACWMPFTLYSLI). The Extracellular segment spans residues 274–282 (ADYTYPSIY). The helical transmembrane segment at 283 to 303 (TYATLLPATYNSIINPVIYAF) threads the bilayer. At 304–334 (RNQEIQKALCLICCGCIPNTLSQRARSPSDV) the chain is on the cytoplasmic side. Residue C317 is the site of S-palmitoyl cysteine attachment. S330 and S332 each carry phosphoserine.

This sequence belongs to the G-protein coupled receptor 1 family. Expressed in the brain, pituitary gland and testis.

Its subcellular location is the cell membrane. Functionally, receptor with constitutive G(s) signaling activity that activates cyclic AMP. Promotes neurite outgrowth and blocks myelin inhibition in neurons. This is G-protein coupled receptor 12 (Gpr12) from Rattus norvegicus (Rat).